Here is a 147-residue protein sequence, read N- to C-terminus: Arginine repressor (147 aa).

The protein belongs to the ArgR family.

The protein resides in the cytoplasm. It participates in amino-acid biosynthesis; L-arginine biosynthesis [regulation]. Regulates arginine biosynthesis genes. The sequence is that of Arginine repressor from Chlamydia caviae (strain ATCC VR-813 / DSM 19441 / 03DC25 / GPIC) (Chlamydophila caviae).